A 1773-amino-acid chain; its full sequence is Plexin-2 (1773 aa).

The signal sequence occupies residues 1–19; it reads MLFIESAFLVLTSLSAAEA. A Sema domain is found at 20–436; the sequence is ATPFEGGVKQ…MPYGIVMEEL (417 aa). The Extracellular portion of the chain corresponds to 20–1130; that stretch reads ATPFEGGVKQ…SDHALPSRLS (1111 aa). N65 is a glycosylation site (N-linked (GlcNAc...) asparagine). 9 disulfide bridges follow: C83–C90, C117–C125, C239–C341, C255–C292, C310–C328, C439–C456, C445–C479, C448–C465, and C459–C471. N241 carries an N-linked (GlcNAc...) asparagine glycan. In terms of domain architecture, PSI 1 spans 438-480; that stretch reads TCAHHESCTDCQVSVDPLCQWCHPTQSCTTSSRCSGPLTTQCP. N-linked (GlcNAc...) asparagine glycosylation is present at N494. A disulfide bridge links C516 with C538. N566 is a glycosylation site (N-linked (GlcNAc...) asparagine). One can recognise a PSI 2 domain in the interval 571-608; that stretch reads DCAGYSTCSTCMSSEFGCQWCSHKCSSSCGSASAKACV. N670 and N693 each carry an N-linked (GlcNAc...) asparagine glycan. Residues 698-739 form the PSI 3 domain; that stretch reads SCSNLAADCSSCLALSPSLSCGWCNRKCSHECHESKATAVCD. 3 IPT/TIG domains span residues 741–829, 831–916, and 919–1006; these read PKID…FSFV, VSIF…FEYR, and PSVN…FLMD. N-linked (GlcNAc...) asparagine glycans are attached at residues N855, N877, N975, and N1007. A helical membrane pass occupies residues 1131-1151; the sequence is FLILGLLLFTVITLIVMCLIF. Residues 1150–1188 adopt a coiled-coil conformation; that stretch reads IFKRRRQEREKEYRKIQLQMENLENNVRKECKQAFAELQ. The Cytoplasmic segment spans residues 1152–1764; sequence KRRRQEREKE…LHVCLETDNH (613 aa).

The protein belongs to the plexin family. In terms of assembly, interacts with mab-20.

It localises to the cell membrane. Involved as a receptor for mab-20/sema-2a in the formation or stabilization of cell-cell contacts at several stages of epithelial morphogenesis. In early embryonic development, required for proper ventral closure of the epidermis. During male tail morphogenesis, involved in precursor cell sorting and in the formation of distinct sensory rays. Involved in axon guidance of SDQL neurons during neurogenesis. This chain is Plexin-2 (plx-2), found in Caenorhabditis briggsae.